Here is a 407-residue protein sequence, read N- to C-terminus: Putative two-component response regulator ARR19 (407 aa).

A Response regulatory domain is found at 35–150 (NVLVVDTNFT…VMANIWQHIV (116 aa)). Residue aspartate 86 is modified to 4-aspartylphosphate. The Nuclear localization signal motif lies at 214-217 (RKPR). Positions 217–271 (RMTWTEELHQKFLEAIEIIGGIEKANPKVLVECLQEMRIEGITRSNVASHLQKHR) form a DNA-binding region, myb-like GARP.

The protein belongs to the ARR family. Type-B subfamily. In terms of assembly, binds the target DNA as a monomer. In terms of processing, two-component system major event consists of a His-to-Asp phosphorelay between a sensor histidine kinase (HK) and a response regulator (RR). In plants, the His-to-Asp phosphorelay involves an additional intermediate named Histidine-containing phosphotransfer protein (HPt). This multistep phosphorelay consists of a His-Asp-His-Asp sequential transfer of a phosphate group between first a His and an Asp of the HK protein, followed by the transfer to a conserved His of the HPt protein and finally the transfer to an Asp in the receiver domain of the RR protein. Detected in trichomes and siliques.

The protein resides in the nucleus. Putative transcriptional activator that binds specifically to the DNA sequence 5'-[AG]GATT-3'. Functions as a response regulator involved in His-to-Asp phosphorelay signal transduction system. Phosphorylation of the Asp residue in the receiver domain activates the ability of the protein to promote the transcription of target genes. Could directly activate some type-A response regulators in response to cytokinins. The polypeptide is Putative two-component response regulator ARR19 (ARR19) (Arabidopsis thaliana (Mouse-ear cress)).